Consider the following 338-residue polypeptide: Ketol-acid reductoisomerase (NADP(+)) (338 aa).

Positions 1–181 constitute a KARI N-terminal Rossmann domain; that stretch reads MKVFYDKDCD…GGGRTGIIET (181 aa). NADP(+) contacts are provided by residues 24–27, Arg-47, Ser-50, Thr-52, and 82–85; these read YGSQ and DEFQ. Residue His-107 is part of the active site. Position 133 (Gly-133) interacts with NADP(+). In terms of domain architecture, KARI C-terminal knotted spans 182-327; it reads TFKDETETDL…EQLRSMMPWI (146 aa). Mg(2+) is bound by residues Asp-190, Glu-194, Glu-226, and Glu-230. Position 251 (Ser-251) interacts with substrate.

This sequence belongs to the ketol-acid reductoisomerase family. Mg(2+) serves as cofactor.

The enzyme catalyses (2R)-2,3-dihydroxy-3-methylbutanoate + NADP(+) = (2S)-2-acetolactate + NADPH + H(+). The catalysed reaction is (2R,3R)-2,3-dihydroxy-3-methylpentanoate + NADP(+) = (S)-2-ethyl-2-hydroxy-3-oxobutanoate + NADPH + H(+). It participates in amino-acid biosynthesis; L-isoleucine biosynthesis; L-isoleucine from 2-oxobutanoate: step 2/4. Its pathway is amino-acid biosynthesis; L-valine biosynthesis; L-valine from pyruvate: step 2/4. Its function is as follows. Involved in the biosynthesis of branched-chain amino acids (BCAA). Catalyzes an alkyl-migration followed by a ketol-acid reduction of (S)-2-acetolactate (S2AL) to yield (R)-2,3-dihydroxy-isovalerate. In the isomerase reaction, S2AL is rearranged via a Mg-dependent methyl migration to produce 3-hydroxy-3-methyl-2-ketobutyrate (HMKB). In the reductase reaction, this 2-ketoacid undergoes a metal-dependent reduction by NADPH to yield (R)-2,3-dihydroxy-isovalerate. The polypeptide is Ketol-acid reductoisomerase (NADP(+)) (Pseudomonas fluorescens (strain ATCC BAA-477 / NRRL B-23932 / Pf-5)).